We begin with the raw amino-acid sequence, 69 residues long: DNA gyrase inhibitor YacG (69 aa).

Residues Cys7, Cys10, Cys26, and Cys30 each coordinate Zn(2+).

Belongs to the DNA gyrase inhibitor YacG family. Interacts with GyrB. Zn(2+) serves as cofactor.

Its function is as follows. Inhibits all the catalytic activities of DNA gyrase by preventing its interaction with DNA. Acts by binding directly to the C-terminal domain of GyrB, which probably disrupts DNA binding by the gyrase. The polypeptide is DNA gyrase inhibitor YacG (Shewanella baltica (strain OS223)).